A 63-amino-acid chain; its full sequence is Large ribosomal subunit protein bL28 (63 aa).

This sequence belongs to the bacterial ribosomal protein bL28 family.

The chain is Large ribosomal subunit protein bL28 from Brachyspira hyodysenteriae (strain ATCC 49526 / WA1).